The sequence spans 478 residues: PRAME family member 11 (478 aa).

The LRR 1; degenerate repeat unit spans residues 99–126; the sequence is RWKLQVLDLQDVCENFWMVWSEAMAHGC. One copy of the LRR 2; degenerate repeat lies at 181–205; it reads HLCCKKLKILGMPFRNIRSILKMVN. One copy of the LRR 3; degenerate repeat lies at 206–232; the sequence is LDCIQEVEVNCKWILPILTQFTPYLGH. An LRR 4; degenerate repeat occupies 233–268; that stretch reads LRNLQKLVLSHMDVSRYVSPEQKKEIVTQFTTQFLK. LRR repeat units follow at residues 269-294, 295-326, 327-347, 351-378, and 379-403; these read LRCL…LSCL, KTSL…SQLK, TLDL…QILL, AATL…ALSR, and CFEL…LLSH.

This sequence belongs to the PRAME family.

The protein is PRAME family member 11 of Homo sapiens (Human).